A 480-amino-acid chain; its full sequence is Zinc finger protein ztf-6 (480 aa).

4 disordered regions span residues 92–160 (CHDS…TMMV), 174–198 (GTNG…EEHD), 282–307 (LDAG…PTAS), and 328–351 (DANT…MKVP). Composition is skewed to low complexity over residues 95 to 105 (SATSTTTTVSH), 131 to 145 (SSIE…SSSV), 174 to 187 (GTNG…TSSS), and 286 to 296 (SSENDGSTSSS). C2H2-type zinc fingers lie at residues 359 to 383 (YICP…FVTH) and 388 to 410 (FNCD…QKIH). The C2H2-type 3; degenerate zinc-finger motif lies at 416-441 (YQCRGCGTNYTTQNGLRLHRQRNPAC). Residues 461-480 (ALSGPLSKNSSPTKQMVSAP) are disordered.

Probable transcription factor, involved in regulation of dopamine neuron lineage specification. May play a role in maintaining robustness of the Wnt/beta-catenin asymmetry pathway. The polypeptide is Zinc finger protein ztf-6 (Caenorhabditis elegans).